Reading from the N-terminus, the 400-residue chain is Nicotinate phosphoribosyltransferase (400 aa).

Residue His-220 is modified to Phosphohistidine; by autocatalysis.

Belongs to the NAPRTase family. In terms of processing, transiently phosphorylated on a His residue during the reaction cycle. Phosphorylation strongly increases the affinity for substrates and increases the rate of nicotinate D-ribonucleotide production. Dephosphorylation regenerates the low-affinity form of the enzyme, leading to product release.

The catalysed reaction is nicotinate + 5-phospho-alpha-D-ribose 1-diphosphate + ATP + H2O = nicotinate beta-D-ribonucleotide + ADP + phosphate + diphosphate. The protein operates within cofactor biosynthesis; NAD(+) biosynthesis; nicotinate D-ribonucleotide from nicotinate: step 1/1. Functionally, catalyzes the synthesis of beta-nicotinate D-ribonucleotide from nicotinate and 5-phospho-D-ribose 1-phosphate at the expense of ATP. In Escherichia coli O127:H6 (strain E2348/69 / EPEC), this protein is Nicotinate phosphoribosyltransferase.